Here is a 450-residue protein sequence, read N- to C-terminus: Zinc metalloproteinase nas-13 (450 aa).

The first 31 residues, 1–31 (MPSPTSSSASVFSSHLFFVFCIFSQIAQSYA), serve as a signal peptide directing secretion. N-linked (GlcNAc...) asparagine glycosylation occurs at N68. A Peptidase M12A domain is found at 110–303 (NAVRQTYLKW…YKINMLYNCP (194 aa)). Cystine bridges form between C152/C302 and C174/C193. Residue H201 coordinates Zn(2+). Residue E202 is part of the active site. The Zn(2+) site is built by H205 and H211. N225 carries an N-linked (GlcNAc...) asparagine glycan. A Cell attachment site motif is present at residues 349–351 (RGD). Intrachain disulfides connect C368–C404, C375–C397, C384–C401, C414–C450, C421–C443, and C430–C447. ShKT domains lie at 368 to 404 (CEDR…CGKC) and 414 to 450 (CEDA…CNFC). Residue N431 is glycosylated (N-linked (GlcNAc...) asparagine).

Zn(2+) is required as a cofactor.

The protein resides in the secreted. Metalloprotease. The polypeptide is Zinc metalloproteinase nas-13 (nas-13) (Caenorhabditis elegans).